A 1336-amino-acid polypeptide reads, in one-letter code: MENLPAVTTEEPTPMGRGPVGPSGGGSTRDQVRTVVMRPSVSWEKAGPEEAKAPVRGDEAPPARVAGPAAGTPPCQMGVYPTDLTLQLLAVRRKSRLRDPGLQQTLRGQLRLLENDSREMARVLGELSARLLSIHSDQDRIVVTFKTFEEIWKFSTYHALGFTHHCLANLLMDQAFWLLLPSEEEETAIQVHVDENALRLTHESLLIQEGPFFVLCPDHHVRVMTGPRDAGNGPQALRQASGAPQGEAAPETDSSPPSPSVSSEEVAVAAAPEPLIPFHQWALRIPQDPIDDAMGGPVMPGNPLMAVGLASALADFQGSGPEEMTFRGGDLIEILGAQVPSLPWCVGRHAASGRVGFVRSSLISMQGPVSELESAIFLNEEEKSFFSEGCFSEEDARQLLRRMSGTDVCSVYSLDSVEEAETEQPQEKEIPPPCLSLEPQETLQKVKNVLEQCKTCPGCPQEPASWGLCAASSDVSLQDPEEPSFCLEAEDDWEDPEALSSLLLFLNAPGYKASFRGLYDVALPWLSSVFRSFSDEEELTGRLAQARGAAKKAGLLMALARLCFLLGRLCSRRLKLSQARVYFEEALGALEGSFGDLFLVVAVYANLASIYRKQKNREKCAQVVPKAMALLLGTPDHICSTEAEGELLQLALRRAVGGQSLQAEARACFLLARHHVHLKQPEEALPFLERLLLLHRDSGAPEAAWLSDCYLLLADIYSRKCLPHLVLSCVKVASLRTRGSLAGSLRSVNLVLQNAPQPHSLPAQTSHYLRQALASLTPGTGQALRGPLYTSLAQLYSHHGCHGPAITFMTQAVEASAIAGVRAIVDHLVALAWLHVLHGQSPVALDILQSVRDAVVASEDQEGVIANMVAVALKRTGRTRQAAESYYRALRVARDLGQQRNQAVGLANFGALCLHAGASRLAQHYLLEAVRLFSRLPLGECGRDFTHVLLQLGHLCTRQGPAQQGKGYYEWALLVAVEMGHVESQLRAVQRLCHFYSAVMPSEAQCVIYHELQLSLACKVADKVLEGQLLETISQLYLSLGTERAYKSALDYTKRSLGIFIDLQKKEKEAHAWLQAGKIYYILRQSELVDLYIQVAQNVALYTGDPNLGLELFEAAGDIFFDGAWEREKAVSFYRDRALPLAVTTGNRKAELRLCNKLVALLATLEEPQEGLEFAHMALALSITLGDRLNERVAYHRLAALQHRLGHGELAEHFYLKALSLCNSPLEFDEETLYYVKVYLVLGDIIFYDLKDPFDAAGYYQLALAAAVDLGNKKAQLKIYTRLATIYHNFLLDREKSLFFYQKARTFATELNVRRVNLPPLPLCGWAPWLAPSHPR.

Methionine 1 bears the N-acetylmethionine mark. Disordered regions lie at residues 1–76 (MENL…PPCQ) and 225–266 (TGPR…SEEV). The span at 18–27 (GPVGPSGGGS) shows a compositional bias: gly residues. A compositionally biased stretch (basic and acidic residues) spans 46–61 (AGPEEAKAPVRGDEAP). 2 stretches are compositionally biased toward low complexity: residues 62 to 74 (PARV…GTPP) and 247 to 266 (EAAP…SEEV). One can recognise an SH3 domain in the interval 305-368 (MAVGLASALA…RSSLISMQGP (64 aa)). 8 TPR repeats span residues 560–593 (ARLC…LEGS), 601–634 (VAVY…LLGT), 665–698 (ARAC…HRDS), 786–819 (GPLY…SAIA), 863–896 (GVIA…ARDL), 946–979 (THVL…AVEM), 1027–1063 (GQLL…FIDL), and 1192–1225 (RVAY…CNSP). Tyrosine 1248 is modified (phosphotyrosine). One copy of the TPR 9 repeat lies at 1277-1311 (LKIYTRLATIYHNFLLDREKSLFFYQKARTFATEL).

The chain is SH3 domain and tetratricopeptide repeat-containing protein 1 (SH3TC1) from Homo sapiens (Human).